Reading from the N-terminus, the 586-residue chain is Glutamate--tRNA ligase (586 aa).

The 'HIGH' region motif lies at 114–124; the sequence is PNPNGPWHVGH. Composition is skewed to basic and acidic residues over residues 431–443 and 459–468; these read ARGEGPEESHEAV and HPEHPDRGDR. A disordered region spans residues 431 to 468; it reads ARGEGPEESHEAVEVPVDDGPDEATPQVHPEHPDRGDR.

Belongs to the class-I aminoacyl-tRNA synthetase family. Glutamate--tRNA ligase type 2 subfamily.

Its subcellular location is the cytoplasm. It catalyses the reaction tRNA(Glu) + L-glutamate + ATP = L-glutamyl-tRNA(Glu) + AMP + diphosphate. Its function is as follows. Catalyzes the attachment of glutamate to tRNA(Glu) in a two-step reaction: glutamate is first activated by ATP to form Glu-AMP and then transferred to the acceptor end of tRNA(Glu). The chain is Glutamate--tRNA ligase from Halobacterium salinarum (strain ATCC 29341 / DSM 671 / R1).